The following is a 492-amino-acid chain: PHO85 cyclin-8 (492 aa).

Disordered regions lie at residues 1-32, 143-163, and 223-252; these read MANDQDPNKSLINDALTRSMSEFYDDDDDNDS, SGSGKLPGRVKSDTATQGTGR, and KVNSNSQIDTDNHSHESGNTTNNETDENES. The segment covering 8-20 has biased composition (polar residues); the sequence is NKSLINDALTRSM. A compositionally biased stretch (acidic residues) spans 23–32; it reads FYDDDDDNDS. Position 32 is a phosphoserine (Ser32).

Belongs to the cyclin family. PHO80 subfamily. As to quaternary structure, forms a cyclin-CDK complex with PHO85.

The protein localises to the cytoplasm. Its subcellular location is the nucleus. In terms of biological role, cyclin partner of the cyclin-dependent kinase (CDK) PHO85. Together with cyclin PCL10, negatively controls glycogen accumulation under favorable growth conditions. Involved in phosphorylation and negative regulation of glycogen synthase GSY2. Also has minor GLC8 kinase activity. The polypeptide is PHO85 cyclin-8 (PCL8) (Saccharomyces cerevisiae (strain ATCC 204508 / S288c) (Baker's yeast)).